The sequence spans 331 residues: MIILGIESTAHTIGVGIVNDNEVLANENETYTPPQGSGIHPREAADHHALKASHLVKRALDKAEVKLSDLDAVAFSQGPGLGPALRVGATVARFIAIKYGKPLVPVHHGVAHIEIAKMTTGAKDPLVLLVSGGHTMVTAYSGGRYRVFGETMDISVGNCLDMFARFLGLPNPGVPHLEECARRGKVMLELPYTVKGQDMSFAGLYTAAVKLVKEGRRVENVCLSIVNTAYYMLAEVTERALALLGKREIVIAGGVARSPILRSIMEIVASEYTATLHVVPPEYAGDNGAMIAWTGLLAYKSGVSISIEDSVIKQRWRIDEVPIPWITSTVS.

Fe cation is bound by residues H108 and H112. Substrate-binding positions include 129–133 (LVSGG), D161, E178, and S258. D286 serves as a coordination point for Fe cation.

Belongs to the KAE1 / TsaD family. Fe(2+) serves as cofactor.

The protein resides in the cytoplasm. The catalysed reaction is L-threonylcarbamoyladenylate + adenosine(37) in tRNA = N(6)-L-threonylcarbamoyladenosine(37) in tRNA + AMP + H(+). Functionally, required for the formation of a threonylcarbamoyl group on adenosine at position 37 (t(6)A37) in tRNAs that read codons beginning with adenine. Is probably involved in the transfer of the threonylcarbamoyl moiety of threonylcarbamoyl-AMP (TC-AMP) to the N6 group of A37. The polypeptide is tRNA N6-adenosine threonylcarbamoyltransferase (Caldivirga maquilingensis (strain ATCC 700844 / DSM 13496 / JCM 10307 / IC-167)).